A 540-amino-acid chain; its full sequence is MSSAAENGEAAPGKQNEEKTYKKTASSAIKGAIQLGIGYTVGNLTSKPERDVLMQDFYVVESVFLPSEGSNLTPAHHYPDFRFKTYAPLAFRYFRELFGIKPDDYLYSICSEPLIELSNPGASGSLFFVTSDDEFIIKTVQHKEAEFLQKLLPGYYMNLNQNPRTLLPKFYGLYCMQSGGINIRIVVMNNVLPRSMRMHFTYDLKGSTYKRRASRKEREKSNPTFKDLDFLQDMHEGLYFDTETYNALMKTLQRDCRVLESFKIMDYSLLLGIHFLDHSLKEKEEETPQNVPDAKRTGMQKVLYSTAMESIQGPGKSGDGIITENPDTMGGIPAKSHRGEKLLLFMGIIDILQSYRLMKKLEHSWKALVYDGDTVSVHRPSFYADRFLKFMNSRVFKKIQALKASPSKKRCNSIAALKATSQEIVSSISQEWKDEKRDLLTEGQSFSSLDEEALGSRHRPDLVPSTPSLFEAASLATTISSSSLYVNEHYPHDRPTLYSNSKGLPSSSTFTLEEGTIYLTAEPNTLEVQDDNASVLDVYL.

Residues 1–21 form a disordered region; sequence MSSAAENGEAAPGKQNEEKTY. Positions 25–395 constitute a PIPK domain; it reads ASSAIKGAIQ…RFLKFMNSRV (371 aa). A phosphoserine mark is found at Ser445, Ser447, and Ser448.

Interacts with RAC1, AJUBA, PLD1, PLD2 and ARF1. Detected in heart, pancreas, brain, kidney, skeletal muscle and lung.

The protein localises to the cytoplasm. Its subcellular location is the cytosol. The protein resides in the cell membrane. It is found in the endomembrane system. The enzyme catalyses a 1,2-diacyl-sn-glycero-3-phospho-(1D-myo-inositol 4-phosphate) + ATP = a 1,2-diacyl-sn-glycero-3-phospho-(1D-myo-inositol-4,5-bisphosphate) + ADP + H(+). It carries out the reaction 1-octadecanoyl-2-(5Z,8Z,11Z,14Z)-eicosatetraenoyl-sn-glycero-3-phospho-1D-myo-inositol 4-phosphate + ATP = 1-octadecanoyl-2-(5Z,8Z,11Z,14Z)-eicosatetraenoyl-sn-glycero-3-phospho-1D-myo-inositol 4,5-bisphosphate + ADP + H(+). It catalyses the reaction 1-octadecanoyl-2-(9Z)-octadecenoyl-sn-glycero-3-phospho-1D-myo-inositol 4-phosphate + ATP = 1-octadecanoyl-2-(9Z)-octadecenoyl-sn-glycero-3-phospho-1D-myo-inositol 4,5-bisphosphate + ADP + H(+). The catalysed reaction is 1-octadecanoyl-2-(9Z)-octadecenoyl-sn-glycero-3-phospho-1D-myo-inositol + ATP = 1-octadecanoyl-2-(9Z)-octadecenoyl-sn-glycero-3-phospho-1D-myo-inositol 5-phosphate + ADP + H(+). The enzyme catalyses 1-octadecanoyl-2-(9Z,12Z)-octadecadienoyl-sn-glycero-3-phospho-1D-myo-inositol + ATP = 1-octadecanoyl-2-(9Z,12Z)-octadecadienoyl-sn-glycero-3-phospho-1D-myo-inositol 5-phosphate + ADP + H(+). It carries out the reaction 1-octadecanoyl-2-(5Z,8Z,11Z,14Z-eicosatetraenoyl)-sn-glycero-3-phospho-(1D-myo-inositol) + ATP = 1-octadecanoyl-2-(5Z,8Z,11Z,14Z)-eicosatetraenoyl-sn-glycero-3-phospho-1D-myo-inositol 5-phosphate + ADP + H(+). It catalyses the reaction 1,2-di-(9Z,12Z)-octadecadienoyl-sn-glycero-3-phospho-1D-myo-inositol + ATP = 1,2-di(9Z,12Z)-octadecadienoyl-sn-glycero-3-phospho-1D-myo-inositol 5-phosphate + ADP + H(+). Functionally, catalyzes the phosphorylation of phosphatidylinositol 4-phosphate (PtdIns(4)P/PI4P) to form phosphatidylinositol 4,5-bisphosphate (PtdIns(4,5)P2/PIP2), a lipid second messenger that regulates several cellular processes such as signal transduction, vesicle trafficking, actin cytoskeleton dynamics, cell adhesion, and cell motility. PtdIns(4,5)P2 can directly act as a second messenger or can be utilized as a precursor to generate other second messengers: inositol 1,4,5-trisphosphate (IP3), diacylglycerol (DAG) or phosphatidylinositol-3,4,5-trisphosphate (PtdIns(3,4,5)P3/PIP3). Mediates RAC1-dependent reorganization of actin filaments. Contributes to the activation of phospholipase PLD2. Together with PIP5K1A, is required, after stimulation by G-protein coupled receptors, for the synthesis of IP3 that will induce stable platelet adhesion. This chain is Phosphatidylinositol 4-phosphate 5-kinase type-1 beta, found in Homo sapiens (Human).